A 570-amino-acid polypeptide reads, in one-letter code: MYCIEEKIEKALGIKEASLVLKNCNIVNVFSSEIIRGDLAIDGDTIIGIGKYKGKTEIDLSNKYVAPGFIDSHVHIESSMVSPKEFARAVISRGTTTIIVDPHEIANVCGMDGIKYMMEETKNMPLDVFFMLSSCVPATSFETSGAVLKAEDLKELIDSDRVLGLGEMMNYPGVLSREEEVLNKLKLAGSYNKIVDGHAPSVRGNELNAYNLAGIKTDHECSSIEEMNEKIRNGMYIAIREGSAAKNLDILIKGVNAKNERRIMFCADDRHPDDILKSGHMDNCVRRAIYNGIENTAAIRMASINAAECYKLERVGAIAPSYKADLVVLEDLKDVKVNMVIKSGEVVFKDNKHLKDMGSKSDITKVSNTVNIKKVSEENLELKLDTDVCSIISVALNSISTKNVKRKVNLSNGIFKCELNYGINKVAVIERHKKSGSIGIGLVENFGLKRGAIASTVAHDSHNIIVLGNNDEDMVKAVNEIERVGGGITISLDGKIIETLELEIAGLMSNKSMEFVAERVSKMINICHNTLGVNKDIQPFMTLAFLALPVIPEIRITDKGVFDVVNFKFL.

This sequence belongs to the metallo-dependent hydrolases superfamily. Adenine deaminase family. Requires Mn(2+) as cofactor.

The catalysed reaction is adenine + H2O + H(+) = hypoxanthine + NH4(+). The protein is Adenine deaminase of Clostridium acetobutylicum (strain ATCC 824 / DSM 792 / JCM 1419 / IAM 19013 / LMG 5710 / NBRC 13948 / NRRL B-527 / VKM B-1787 / 2291 / W).